A 243-amino-acid polypeptide reads, in one-letter code: UDP-2,3-diacylglucosamine hydrolase (243 aa).

The Mn(2+) site is built by Asp-9, His-11, Asp-42, Asn-79, and His-114. 79-80 (NR) is a binding site for substrate. Residues Asp-122, Ser-160, Asn-164, and His-195 each contribute to the substrate site. Residues His-195 and His-197 each contribute to the Mn(2+) site.

Belongs to the LpxH family. Mn(2+) serves as cofactor.

The protein localises to the cell inner membrane. The catalysed reaction is UDP-2-N,3-O-bis[(3R)-3-hydroxytetradecanoyl]-alpha-D-glucosamine + H2O = 2-N,3-O-bis[(3R)-3-hydroxytetradecanoyl]-alpha-D-glucosaminyl 1-phosphate + UMP + 2 H(+). It functions in the pathway glycolipid biosynthesis; lipid IV(A) biosynthesis; lipid IV(A) from (3R)-3-hydroxytetradecanoyl-[acyl-carrier-protein] and UDP-N-acetyl-alpha-D-glucosamine: step 4/6. Hydrolyzes the pyrophosphate bond of UDP-2,3-diacylglucosamine to yield 2,3-diacylglucosamine 1-phosphate (lipid X) and UMP by catalyzing the attack of water at the alpha-P atom. Involved in the biosynthesis of lipid A, a phosphorylated glycolipid that anchors the lipopolysaccharide to the outer membrane of the cell. This chain is UDP-2,3-diacylglucosamine hydrolase, found in Coxiella burnetii (strain RSA 331 / Henzerling II).